The chain runs to 400 residues: S-adenosylmethionine sensor upstream of mTORC1 (400 aa).

Residues Arg99, Gly168, Asp186, Asp198, Phe199, and Ser240 each contribute to the S-adenosyl-L-methionine site.

It belongs to the BMT2/SAMTOR family. Interacts with the GATOR1 complex; interaction is disrupted when samtor binds S-adenosyl-L-methionine. Interacts with the KICSTOR complex; interaction is disrupted when samtor binds S-adenosyl-L-methionine.

S-adenosyl-L-methionine-binding protein that acts as an inhibitor of mTORC1 signaling via interaction with the GATOR1 and KICSTOR complexes. Acts as a sensor of S-adenosyl-L-methionine to signal methionine sufficiency to mTORC1: in presence of methionine, binds S-adenosyl-L-methionine, leading to disrupt interaction with the GATOR1 and KICSTOR complexes and promote mTORC1 signaling. Upon methionine starvation, S-adenosyl-L-methionine levels are reduced, thereby promoting the association with GATOR1 and KICSTOR, leading to inhibit mTORC1 signaling. Probably also acts as a S-adenosyl-L-methionine-dependent methyltransferase. The polypeptide is S-adenosylmethionine sensor upstream of mTORC1 (Xenopus laevis (African clawed frog)).